We begin with the raw amino-acid sequence, 611 residues long: Mitochondrial distribution and morphology protein 34 (611 aa).

The SMP-LTD domain maps to 1 to 195; that stretch reads MAFNFNWSPL…LPAIIHRLSL (195 aa). The span at 325–342 shows a compositional bias: polar residues; that stretch reads SAPLSSQDTASVASSQSR. 4 disordered regions span residues 325–347, 361–402, 415–544, and 587–611; these read SAPL…GLPS, RHSK…STIT, SIIP…PTYT, and SYVG…AYRH. Basic residues predominate over residues 361 to 373; it reads RHSKAHARKRKKR. 2 stretches are compositionally biased toward basic and acidic residues: residues 374-385 and 444-459; these read VIDLRPHRKPTD and TLRD…ERTN. The span at 520 to 529 shows a compositional bias: pro residues; the sequence is PLGPPAPAPI.

It belongs to the MDM34 family. As to quaternary structure, component of the ER-mitochondria encounter structure (ERMES) or MDM complex, composed of MMM1, MDM10, MDM12 and MDM34.

The protein resides in the mitochondrion outer membrane. Functionally, component of the ERMES/MDM complex, which serves as a molecular tether to connect the endoplasmic reticulum (ER) and mitochondria. Components of this complex are involved in the control of mitochondrial shape and protein biogenesis, and function in nonvesicular lipid trafficking between the ER and mitochondria. MDM34 is required for the interaction of the ER-resident membrane protein MMM1 and the outer mitochondrial membrane-resident beta-barrel protein MDM10. This Paracoccidioides brasiliensis (strain Pb18) protein is Mitochondrial distribution and morphology protein 34.